Reading from the N-terminus, the 320-residue chain is Undecaprenyl-diphosphatase (320 aa).

Helical transmembrane passes span 9–29, 82–102, 130–150, 161–181, 191–211, 236–256, 265–285, and 296–316; these read FVLV…LEVF, GVAF…WYFW, LGII…KKLI, LGAI…GEKL, LTMQ…IPGV, FLLG…DVFA, LPLI…IAGL, and VFIW…SAGI.

This sequence belongs to the UppP family.

The protein localises to the cell inner membrane. It carries out the reaction di-trans,octa-cis-undecaprenyl diphosphate + H2O = di-trans,octa-cis-undecaprenyl phosphate + phosphate + H(+). In terms of biological role, catalyzes the dephosphorylation of undecaprenyl diphosphate (UPP). Confers resistance to bacitracin. This is Undecaprenyl-diphosphatase from Trichormus variabilis (strain ATCC 29413 / PCC 7937) (Anabaena variabilis).